Reading from the N-terminus, the 316-residue chain is UPF0761 membrane protein PM1616 (316 aa).

The next 6 helical transmembrane spans lie at 36–56 (MLAL…FPVF), 92–112 (QMSA…INSI), 128–148 (LVFS…LIGA), 172–192 (ILSF…YTVV), 204–224 (IGAL…LWYV), and 236–256 (AMAT…VILI).

The protein belongs to the UPF0761 family.

The protein localises to the cell inner membrane. This is UPF0761 membrane protein PM1616 from Pasteurella multocida (strain Pm70).